Consider the following 327-residue polypeptide: Clavesin-2 (327 aa).

The CRAL-TRIO domain maps to 96-257 (IKQALKDGFP…EFGGMLPPYD (162 aa)). The disordered stretch occupies residues 287 to 327 (EVEKELSPKSMKRSQSVVDPTVLKRMDKNEEENMQPLLSLD). Ser325 carries the phosphoserine modification.

Forms a complex with clathrin heavy chain and gamma-adaptin.

The protein resides in the golgi apparatus. It localises to the trans-Golgi network membrane. Its subcellular location is the cytoplasmic vesicle. It is found in the clathrin-coated vesicle. The protein localises to the early endosome membrane. Functionally, required for normal morphology of late endosomes and/or lysosomes in neurons. Binds phosphatidylinositol 3,5-bisphosphate (PtdIns(3,5)P2). The sequence is that of Clavesin-2 (CLVS2) from Homo sapiens (Human).